Reading from the N-terminus, the 697-residue chain is Tryptophan synthase (697 aa).

The interval 1-298 is tryptophan synthase alpha chain; that stretch reads MTEQIKKTFL…AVVEPINEMY (298 aa). Residues E50 and D61 each act as proton acceptor in the active site. Residues 298 to 697 form a tryptophan synthase beta chain region; it reads YLPQKYGMFG…GPKIGWDLRF (400 aa). At K381 the chain carries N6-(pyridoxal phosphate)lysine.

The protein in the N-terminal section; belongs to the TrpA family. It in the C-terminal section; belongs to the TrpB family. Requires pyridoxal 5'-phosphate as cofactor.

The catalysed reaction is (1S,2R)-1-C-(indol-3-yl)glycerol 3-phosphate + L-serine = D-glyceraldehyde 3-phosphate + L-tryptophan + H2O. It participates in amino-acid biosynthesis; L-tryptophan biosynthesis; L-tryptophan from chorismate: step 5/5. The sequence is that of Tryptophan synthase (trp2) from Schizosaccharomyces pombe (strain 972 / ATCC 24843) (Fission yeast).